Here is a 1052-residue protein sequence, read N- to C-terminus: ATP-dependent DNA helicase MPH1 (1052 aa).

The 168-residue stretch at 89–256 (IVRKGLLQNI…EVVNNLNISK (168 aa)) folds into the Helicase ATP-binding domain. 102-109 (IPTGMGKT) is an ATP binding site. The short motif at 204–207 (DEAH) is the DEAH box element. A Helicase C-terminal domain is found at 432-649 (ELTQFFYENP…HLVQYRKSDR (218 aa)). Disordered stretches follow at residues 495 to 550 (HGPK…NQKQ), 798 to 832 (IGDT…DLPL), 869 to 898 (SKRQ…QPEV), and 1002 to 1052 (HTVS…DSDF). Over residues 503–532 (SDREKRLEEERRMDEEKKQAALQEKLERTS) the composition is skewed to basic and acidic residues. Residues 534-549 (RTGSSEEAQLSGMNQK) are compositionally biased toward polar residues. Low complexity-rich tracts occupy residues 875 to 898 (QPEV…QPEV) and 1005 to 1028 (SQSQ…QQAS). The segment covering 1029–1040 (QKDRSSQDKDLT) has biased composition (basic and acidic residues). Over residues 1043 to 1052 (ELEDLLDSDF) the composition is skewed to acidic residues.

The protein belongs to the DEAD box helicase family. DEAH subfamily. FANCM sub-subfamily. In terms of assembly, interacts with the MHF histone-fold complex to form the FANCM-MHF complex.

The protein localises to the nucleus. The catalysed reaction is ATP + H2O = ADP + phosphate + H(+). In terms of biological role, ATP-dependent DNA helicase involved in DNA damage repair by homologous recombination and in genome maintenance. Capable of unwinding D-loops. Plays a role in limiting crossover recombinants during mitotic DNA double-strand break (DSB) repair. Component of a FANCM-MHF complex which promotes gene conversion at blocked replication forks, probably by reversal of the stalled fork. This Candida glabrata (strain ATCC 2001 / BCRC 20586 / JCM 3761 / NBRC 0622 / NRRL Y-65 / CBS 138) (Yeast) protein is ATP-dependent DNA helicase MPH1.